The chain runs to 562 residues: Arylsulfatase H (562 aa).

Asp-15, Asp-16, and Cys-55 together coordinate Ca(2+). Residue Cys-55 is the Nucleophile of the active site. The residue at position 55 (Cys-55) is a 3-oxoalanine (Cys). A substrate-binding site is contributed by Lys-115. His-117 is a catalytic residue. 2 consecutive transmembrane segments (helical) span residues 167–187 (LWIS…PKFA) and 189–209 (WFSV…LFFT). His-271 is a substrate binding site. Ca(2+) contacts are provided by Asp-323 and Asn-324. Substrate is bound at residue Lys-348.

The protein belongs to the sulfatase family. Requires Ca(2+) as cofactor. Post-translationally, the conversion to 3-oxoalanine (also known as C-formylglycine, FGly), of a serine or cysteine residue in prokaryotes and of a cysteine residue in eukaryotes, is critical for catalytic activity.

Its subcellular location is the membrane. This is Arylsulfatase H (ARSH) from Homo sapiens (Human).